Here is a 194-residue protein sequence, read N- to C-terminus: Fe/S biogenesis protein NfuA (194 aa).

Residues C152 and C155 each contribute to the [4Fe-4S] cluster site.

The protein belongs to the NfuA family. As to quaternary structure, homodimer. It depends on [4Fe-4S] cluster as a cofactor.

Functionally, involved in iron-sulfur cluster biogenesis. Binds a 4Fe-4S cluster, can transfer this cluster to apoproteins, and thereby intervenes in the maturation of Fe/S proteins. Could also act as a scaffold/chaperone for damaged Fe/S proteins. The polypeptide is Fe/S biogenesis protein NfuA (Azotobacter vinelandii (strain DJ / ATCC BAA-1303)).